The primary structure comprises 541 residues: Chaperonin GroEL 1 (541 aa).

Residues 29 to 32, 86 to 90, Gly413, and Asp492 each bind ATP; these read TLGP and DGTTT.

Belongs to the chaperonin (HSP60) family. Forms a cylinder of 14 subunits composed of two heptameric rings stacked back-to-back. Interacts with the co-chaperonin GroES.

It is found in the cytoplasm. The enzyme catalyses ATP + H2O + a folded polypeptide = ADP + phosphate + an unfolded polypeptide.. In terms of biological role, together with its co-chaperonin GroES, plays an essential role in assisting protein folding. The GroEL-GroES system forms a nano-cage that allows encapsulation of the non-native substrate proteins and provides a physical environment optimized to promote and accelerate protein folding. This chain is Chaperonin GroEL 1, found in Rhodococcus jostii (strain RHA1).